The sequence spans 1581 residues: Pentafunctional AROM polypeptide (1581 aa).

The tract at residues 1–384 (MPEPTKISIL…YEPKASVVPN (384 aa)) is 3-dehydroquinate synthase. Residues 44-46 (DTN), 81-84 (EVSK), 114-116 (GGV), and aspartate 119 contribute to the NAD(+) site. Arginine 130 contacts 7-phospho-2-dehydro-3-deoxy-D-arabino-heptonate. 139–140 (TT) serves as a coordination point for NAD(+). Aspartate 146 and lysine 152 together coordinate 7-phospho-2-dehydro-3-deoxy-D-arabino-heptonate. NAD(+) is bound at residue lysine 161. Asparagine 162 lines the 7-phospho-2-dehydro-3-deoxy-D-arabino-heptonate pocket. NAD(+) is bound by residues 179–182 (FLET) and asparagine 190. Glutamate 194 serves as a coordination point for Zn(2+). 7-phospho-2-dehydro-3-deoxy-D-arabino-heptonate-binding positions include 194-197 (EVIK) and lysine 250. Residue glutamate 260 is the Proton acceptor; for 3-dehydroquinate synthase activity of the active site. 7-phospho-2-dehydro-3-deoxy-D-arabino-heptonate-binding positions include 264-268 (RNLLN) and histidine 271. Histidine 271 lines the Zn(2+) pocket. Histidine 275 acts as the Proton acceptor; for 3-dehydroquinate synthase activity in catalysis. 7-phospho-2-dehydro-3-deoxy-D-arabino-heptonate contacts are provided by histidine 287 and lysine 356. Residue histidine 287 coordinates Zn(2+). An EPSP synthase region spans residues 397-842 (VHPGVPKESN…WDTLRQLFSV (446 aa)). Cysteine 824 (for EPSP synthase activity) is an active-site residue. The shikimate kinase stretch occupies residues 864–1056 (SASVFIIGMR…KQKKHSFFVS (193 aa)). Position 871–878 (871–878 (GMRGAGKT)) interacts with ATP. The 3-dehydroquinase stretch occupies residues 1057–1277 (LTLPDLRSAS…AAPGQLSATE (221 aa)). The Proton acceptor; for 3-dehydroquinate dehydratase activity role is filled by histidine 1180. Lysine 1208 functions as the Schiff-base intermediate with substrate; for 3-dehydroquinate dehydratase activity in the catalytic mechanism. Residues 1290-1581 (KKRFAIFGNP…ARTAVLGDSA (292 aa)) form a shikimate dehydrogenase region.

This sequence in the N-terminal section; belongs to the sugar phosphate cyclases superfamily. Dehydroquinate synthase family. In the 2nd section; belongs to the EPSP synthase family. It in the 3rd section; belongs to the shikimate kinase family. The protein in the 4th section; belongs to the type-I 3-dehydroquinase family. This sequence in the C-terminal section; belongs to the shikimate dehydrogenase family. Homodimer. The cofactor is Zn(2+).

The protein localises to the cytoplasm. It catalyses the reaction 7-phospho-2-dehydro-3-deoxy-D-arabino-heptonate = 3-dehydroquinate + phosphate. The enzyme catalyses 3-dehydroquinate = 3-dehydroshikimate + H2O. It carries out the reaction shikimate + NADP(+) = 3-dehydroshikimate + NADPH + H(+). The catalysed reaction is shikimate + ATP = 3-phosphoshikimate + ADP + H(+). It catalyses the reaction 3-phosphoshikimate + phosphoenolpyruvate = 5-O-(1-carboxyvinyl)-3-phosphoshikimate + phosphate. It functions in the pathway metabolic intermediate biosynthesis; chorismate biosynthesis; chorismate from D-erythrose 4-phosphate and phosphoenolpyruvate: step 2/7. It participates in metabolic intermediate biosynthesis; chorismate biosynthesis; chorismate from D-erythrose 4-phosphate and phosphoenolpyruvate: step 3/7. Its pathway is metabolic intermediate biosynthesis; chorismate biosynthesis; chorismate from D-erythrose 4-phosphate and phosphoenolpyruvate: step 4/7. The protein operates within metabolic intermediate biosynthesis; chorismate biosynthesis; chorismate from D-erythrose 4-phosphate and phosphoenolpyruvate: step 5/7. It functions in the pathway metabolic intermediate biosynthesis; chorismate biosynthesis; chorismate from D-erythrose 4-phosphate and phosphoenolpyruvate: step 6/7. Functionally, the AROM polypeptide catalyzes 5 consecutive enzymatic reactions in prechorismate polyaromatic amino acid biosynthesis. The polypeptide is Pentafunctional AROM polypeptide (Aspergillus terreus (strain NIH 2624 / FGSC A1156)).